A 126-amino-acid chain; its full sequence is Small ribosomal subunit protein uS11 (126 aa).

Belongs to the universal ribosomal protein uS11 family. As to quaternary structure, part of the 30S ribosomal subunit.

In terms of biological role, located on the platform of the 30S subunit. This chain is Small ribosomal subunit protein uS11, found in Methanosarcina mazei (strain ATCC BAA-159 / DSM 3647 / Goe1 / Go1 / JCM 11833 / OCM 88) (Methanosarcina frisia).